Consider the following 667-residue polypeptide: MIASCLYYLLLPAARLFRFLSDAFFTCRKNALLAKSSSPQVEGNFAMAPRGPDQEECEGLLQQWREEGWNQTLSTASEGPLADKGLAESSLALLMDNSGEQDTASEDKWSSRQLSDLRAADNLDQPFPEVLGEEPLAEDEGPLWAAVPVQTGPQYADCAVLPMGAMAAEQWEEDPAMVAWSIAPEPMPQEETSMWPFEGLEQLQPPPMEIPYHEILWREWEDFSTQPDAQGLEAGDGPQFQFTLMSYNILAQDLMQQSSELYLHCHPDILNWNYRFANLMQEFQHWDPDILCLQEVQEDHYWEQLEPSLRMMGFTCFYKRRTGCKTDGCAVCYKPTRFRLLCASPVEYFRPGLELLNRDNVGLVLLLQPLVPEGLGQVSVAPLCVANTHVLYNPRRGDVKLAQMAILLAEVDKVARLSDGSHCPIILCGDLNSVPDSPLYNFIRDGELQYNGMPAWKVSGQEDFSHQLYQRKLQAPLWPSSLGITDCCQYVTSCHPKRSERLKYGRDFLLRFRFCDLACQRPVGLVLMEGVTDTKPDRPAGWAECIFEEEISELEPVFPRTIGTIQHCLHLTSVYTHFLPQHGRPEVTTMPLGLGMTVDYIFFSAESCENENRSDHRLDRDGTLKLLGRLSLLSEEILWAANGLPNPFYSSDHLCLLASFGMEVTAP.

Phosphoserine occurs at positions 77 and 105.

Belongs to the CCR4/nocturin family.

The sequence is that of Protein angel homolog 1 from Rattus norvegicus (Rat).